The sequence spans 146 residues: Hemoglobin subunit beta (146 aa).

The Globin domain maps to 2–146; the sequence is HWSAEEKQLI…VAHALARKYH (145 aa). Positions 63 and 92 each coordinate heme b.

It belongs to the globin family. As to quaternary structure, heterotetramer of two alpha chains and two beta chains. As to expression, red blood cells.

In terms of biological role, involved in oxygen transport from the lung to the various peripheral tissues. The polypeptide is Hemoglobin subunit beta (HBB) (Psittacula krameri (Rose-ringed parakeet)).